Reading from the N-terminus, the 523-residue chain is REST corepressor 2 (523 aa).

A disordered region spans residues Met-1–Asp-43. Residues His-30 to Asp-43 are compositionally biased toward basic and acidic residues. Residues Ser-31, Ser-35, Ser-36, and Ser-63 each carry the phosphoserine modification. One can recognise an ELM2 domain in the interval Ser-44–Thr-129. Lys-88 participates in a covalent cross-link: Glycyl lysine isopeptide (Lys-Gly) (interchain with G-Cter in SUMO2). Residues Pro-130 to Ser-181 form the SANT 1 domain. Residues Val-185–Leu-265 are disordered. Ser-202 bears the Phosphoserine mark. Residues Tyr-248 to Pro-260 show a composition bias toward basic residues. Positions Thr-283–Gly-314 form a coiled coil. Positions Lys-327 to Asn-378 constitute an SANT 2 domain. The interval Glu-387 to Leu-523 is disordered. Over residues Ser-432 to Thr-459 the composition is skewed to pro residues. Residues Ala-460–Pro-482 are compositionally biased toward low complexity. Arg-479 carries the post-translational modification Asymmetric dimethylarginine.

It belongs to the CoREST family.

Its subcellular location is the nucleus. May act as a component of a corepressor complex that represses transcription. This is REST corepressor 2 (Rcor2) from Rattus norvegicus (Rat).